The following is a 414-amino-acid chain: Alanine--glyoxylate aminotransferase (414 aa).

Residues 1-23 (MFRMLAKASVTLGSRAASWVRNM) constitute a mitochondrion transit peptide. K231 bears the N6-(pyridoxal phosphate)lysine mark. At K247 the chain carries N6-acetyllysine; alternate. An N6-succinyllysine; alternate modification is found at K247. K256 and K334 each carry N6-acetyllysine. R382 is a substrate binding site. A Microbody targeting signal motif is present at residues 412 to 414 (NKL).

Belongs to the class-V pyridoxal-phosphate-dependent aminotransferase family. In terms of assembly, homodimer. It depends on pyridoxal 5'-phosphate as a cofactor.

The protein resides in the peroxisome. It localises to the mitochondrion matrix. The enzyme catalyses L-serine + pyruvate = 3-hydroxypyruvate + L-alanine. The catalysed reaction is glyoxylate + L-alanine = glycine + pyruvate. In terms of biological role, catalyzes the transamination of glyoxylate to glycine and contributes to the glyoxylate detoxification. Its function is as follows. Catalyzes the transamination between L-serine and pyruvate and weakly contributes to gluconeogenesis from the L-serine metabolism. The chain is Alanine--glyoxylate aminotransferase from Rattus norvegicus (Rat).